We begin with the raw amino-acid sequence, 140 residues long: Oocyte zinc finger protein XlCOF15 (140 aa).

5 C2H2-type zinc fingers span residues 6–28, 34–56, 62–84, 90–112, and 118–140; these read FTCKECSKSFSSNSHLSRHQKIH, FTCTECDKKFLTRSSLLLHQKVH, FICTECGKGFSAKSQLHRHHVIH, FTCAECGKTFSYKQSLVTHRAAH, and FICTECGKSFSHKNNLQTHLKSH.

The protein belongs to the krueppel C2H2-type zinc-finger protein family.

It localises to the nucleus. May be involved in transcriptional regulation. This is Oocyte zinc finger protein XlCOF15 from Xenopus laevis (African clawed frog).